A 64-amino-acid chain; its full sequence is Large ribosomal subunit protein bL32 (64 aa).

This sequence belongs to the bacterial ribosomal protein bL32 family.

The chain is Large ribosomal subunit protein bL32 from Flavobacterium psychrophilum (strain ATCC 49511 / DSM 21280 / CIP 103535 / JIP02/86).